The chain runs to 318 residues: NADH-ubiquinone oxidoreductase chain 1 (318 aa).

Helical transmembrane passes span 2-22, 68-88, 100-120, 146-166, 171-191, 213-233, 253-273, and 285-305; these read PMTN…FLML, ITLY…LWTP, LGLL…LWSG, LAII…STLV, HLWL…STLA, IEYA…NIIM, ELYT…FLWI, and LMHL…MWYI.

The protein belongs to the complex I subunit 1 family. As to quaternary structure, core subunit of respiratory chain NADH dehydrogenase (Complex I) which is composed of 45 different subunits.

The protein resides in the mitochondrion inner membrane. The enzyme catalyses a ubiquinone + NADH + 5 H(+)(in) = a ubiquinol + NAD(+) + 4 H(+)(out). In terms of biological role, core subunit of the mitochondrial membrane respiratory chain NADH dehydrogenase (Complex I) which catalyzes electron transfer from NADH through the respiratory chain, using ubiquinone as an electron acceptor. Essential for the catalytic activity and assembly of complex I. The sequence is that of NADH-ubiquinone oxidoreductase chain 1 (MT-ND1) from Pan troglodytes (Chimpanzee).